Here is a 644-residue protein sequence, read N- to C-terminus: Exoribonuclease 2 (644 aa).

The RNB domain maps to R189–K516. Residues N561 to A643 form the S1 motif domain.

Belongs to the RNR ribonuclease family. RNase II subfamily.

The protein localises to the cytoplasm. It catalyses the reaction Exonucleolytic cleavage in the 3'- to 5'-direction to yield nucleoside 5'-phosphates.. Involved in mRNA degradation. Hydrolyzes single-stranded polyribonucleotides processively in the 3' to 5' direction. The protein is Exoribonuclease 2 of Salmonella agona (strain SL483).